Consider the following 116-residue polypeptide: Large ribosomal subunit protein bL19 (116 aa).

Belongs to the bacterial ribosomal protein bL19 family.

This protein is located at the 30S-50S ribosomal subunit interface and may play a role in the structure and function of the aminoacyl-tRNA binding site. This chain is Large ribosomal subunit protein bL19, found in Pasteurella multocida (strain Pm70).